The chain runs to 487 residues: Protein SMG9 (487 aa).

Disordered regions lie at residues 30-83 (EDAA…PPAL) and 136-164 (RDKG…LQPP). Positions 42–70 (LKKDRDREQETWDRERDKDRKLERDREAE) are enriched in basic and acidic residues.

It belongs to the SMG9 family.

Its function is as follows. Involved in nonsense-mediated decay (NMD) of mRNAs containing premature stop codons. Probable component of kinase complex containing nonC and recruited to stalled ribosomes. In Drosophila melanogaster (Fruit fly), this protein is Protein SMG9.